The chain runs to 196 residues: Acyl-homoserine-lactone synthase (196 aa).

It belongs to the autoinducer synthase family.

The enzyme catalyses a fatty acyl-[ACP] + S-adenosyl-L-methionine = an N-acyl-L-homoserine lactone + S-methyl-5'-thioadenosine + holo-[ACP] + H(+). Its function is as follows. Required for the synthesis of a yet unknown N-aceyl-homoserine lactone (N-aceyl-HSL), an autoinducer molecule which binds to PhzR and thus regulates phenazine production. In Pseudomonas chlororaphis (Pseudomonas aureofaciens), this protein is Acyl-homoserine-lactone synthase (phzI).